The sequence spans 630 residues: Very-long-chain aldehyde decarbonylase GL1-7 (630 aa).

4 helical membrane passes run 93–113, 126–146, 185–205, and 325–345; these read LYLDDQIILNGLLFYLGYAII, GALITILLHMGPVEFLYYWFH, FLLFSISILPPIFMGCGSVLA, and VWYMWMLWPVAWLSMVLAWIY. Positions 133-272 constitute a Fatty acid hydroxylase domain; it reads LHMGPVEFLY…MPFYDYIYNT (140 aa).

Belongs to the sterol desaturase family. Homodimer. As to expression, expressed in panicles at low levels.

The protein resides in the endoplasmic reticulum membrane. It catalyses the reaction a long-chain fatty aldehyde + 2 NADPH + O2 + H(+) = a long-chain alkane + formate + 2 NADP(+) + H2O. In terms of biological role, aldehyde decarbonylase involved in the conversion of aldehydes to alkanes. Core component of a very-long-chain alkane synthesis complex. The chain is Very-long-chain aldehyde decarbonylase GL1-7 from Oryza sativa subsp. japonica (Rice).